Consider the following 737-residue polypeptide: Delta and Notch-like epidermal growth factor-related receptor (737 aa).

A signal peptide spans 1 to 34 (MQPRRAQAPGAQLLPALALLLLLLGAGPRGSSLA). Residues 35-640 (NPVPAAPLSA…LTNMPRHSLY (606 aa)) are Extracellular-facing. 2 consecutive EGF-like domains span residues 44-92 (APGP…ANCQ) and 94-133 (VADP…PNCE). The tract at residues 44 to 133 (APGPCAAQPC…NEGYEGPNCE (90 aa)) is interaction with NOTCH1. Cystine bridges form between Cys-48-Cys-59, Cys-53-Cys-80, Cys-82-Cys-91, Cys-98-Cys-108, Cys-103-Cys-121, and Cys-123-Cys-132. Asn-223 carries an N-linked (GlcNAc...) asparagine glycan. 5 EGF-like domains span residues 309 to 348 (PGES…TFCE), 349 to 390 (EYDA…ELCQ), 392 to 428 (KIDY…SACE), 430 to 466 (KVDP…PTCA), and 468 to 503 (LIDF…LYCE). 23 disulfides stabilise this stretch: Cys-319-Cys-336, Cys-338-Cys-347, Cys-353-Cys-364, Cys-358-Cys-378, Cys-380-Cys-389, Cys-396-Cys-407, Cys-401-Cys-416, Cys-418-Cys-427, Cys-434-Cys-445, Cys-439-Cys-454, Cys-456-Cys-465, Cys-472-Cys-482, Cys-477-Cys-491, Cys-493-Cys-502, Cys-509-Cys-520, Cys-514-Cys-529, Cys-531-Cys-540, Cys-547-Cys-558, Cys-552-Cys-567, Cys-569-Cys-578, Cys-585-Cys-596, Cys-590-Cys-605, and Cys-607-Cys-616. Residues 505–541 (EYNECLSAPCLNAATCRDLVNGYECVCLAEYKGTHCE) form the EGF-like 8; calcium-binding domain. The EGF-like 9 domain occupies 543-579 (YKDPCANVSCLNGATCDSDGLNGTCICAPGFTGEECD). Residues 546-568 (PCANVSCLNGATCDSDGLNGTCI) form the Follistatin-like domain. An N-linked (GlcNAc...) asparagine glycan is attached at Asn-564. In terms of domain architecture, EGF-like 10; calcium-binding spans 581-617 (DINECDSNPCHHGGSCLDQPNGYNCHCPHGWVGANCE). The helical transmembrane segment at 641–661 (IIIGALCVAFILMLIILIVGI) threads the bilayer. Residues 662 to 737 (CRISRIEYQG…LVTLIKTKDL (76 aa)) lie on the Cytoplasmic side of the membrane. An interaction with AP1G1 and somatodendritic targeting region spans residues 677–680 (YEEF). Ser-685 is modified (phosphoserine). 2 positions are modified to phosphotyrosine: Tyr-711 and Tyr-721. Phosphoserine is present on Ser-722.

In terms of assembly, interacts with AP1G1. Interacts with NOTCH1. In terms of tissue distribution, expressed in brain, spinal cord and adrenal gland.

Its subcellular location is the cell membrane. In terms of biological role, activator of the NOTCH1 pathway. May mediate neuron-glia interaction during astrocytogenesis. This Homo sapiens (Human) protein is Delta and Notch-like epidermal growth factor-related receptor (DNER).